A 156-amino-acid chain; its full sequence is Hydrogenase 3 maturation protease (156 aa).

3 residues coordinate Ni(2+): D16, D62, and H90.

This sequence belongs to the peptidase A31 family. As to quaternary structure, monomer.

The catalysed reaction is This enzyme specifically removes a 32-amino acid peptide from the C-terminus of the precursor of the large subunit of E.coli hydrogenase 3 by cleavage at the C-terminal side of Arg-537.. Functionally, protease involved in the C-terminal processing of HycE, the large subunit of hydrogenase 3. This chain is Hydrogenase 3 maturation protease (hycI), found in Escherichia coli O157:H7.